Consider the following 109-residue polypeptide: U4-lycotoxin-Ls1a (109 aa).

The N-terminal stretch at 1 to 22 (MKVLVLFSVLFLTLFSYSSTEA) is a signal peptide. Residues 23–44 (IDELDSDAEEDMLSLMANEQVR) constitute a propeptide that is removed on maturation. Residues 45-88 (AKACTPRLHDCSHDRHSCCRGELFKDVCYCFYPEGEDKTEVCSC) form a knottin domain region. Intrachain disulfides connect C48–C63, C55–C72, C62–C88, and C74–C86. The tract at residues 89-108 (QQPKSHKYIEKVVDKAKTVV) is linear cationic cytotoxin domain.

Belongs to the neurotoxin 19 (CSTX) family. 05 (U4-Lctx) subfamily. Expressed by the venom gland.

The protein localises to the secreted. Enhances the high-affinity desensitization of human P2RX3 purinoceptors. The polypeptide is U4-lycotoxin-Ls1a (Lycosa singoriensis (Wolf spider)).